A 275-amino-acid polypeptide reads, in one-letter code: Dolichyl-diphosphooligosaccharide--protein glycosyltransferase subunit delta (275 aa).

The N-terminal stretch at 1–18 (MKTSVFIAIFNLLVCALA) is a signal peptide. 3 consecutive transmembrane segments (helical) span residues 179–199 (VFII…VGFI), 214–234 (VQLL…LNFV), and 241–261 (SIFT…YFGV).

It belongs to the SWP1 family. Component of the oligosaccharyltransferase (OST) complex.

The protein resides in the endoplasmic reticulum membrane. It participates in protein modification; protein glycosylation. Subunit of the oligosaccharyl transferase (OST) complex that catalyzes the initial transfer of a defined glycan (Glc(3)Man(9)GlcNAc(2) in eukaryotes) from the lipid carrier dolichol-pyrophosphate to an asparagine residue within an Asn-X-Ser/Thr consensus motif in nascent polypeptide chains, the first step in protein N-glycosylation. N-glycosylation occurs cotranslationally and the complex associates with the Sec61 complex at the channel-forming translocon complex that mediates protein translocation across the endoplasmic reticulum (ER). All subunits are required for a maximal enzyme activity. Plays a role in cell wall integrity and in engulfment by macrophages. In Candida albicans (strain SC5314 / ATCC MYA-2876) (Yeast), this protein is Dolichyl-diphosphooligosaccharide--protein glycosyltransferase subunit delta.